The primary structure comprises 430 residues: Glutamate-1-semialdehyde 2,1-aminomutase (430 aa).

Position 268 is an N6-(pyridoxal phosphate)lysine (K268).

Belongs to the class-III pyridoxal-phosphate-dependent aminotransferase family. HemL subfamily. It depends on pyridoxal 5'-phosphate as a cofactor.

The protein resides in the cytoplasm. The catalysed reaction is (S)-4-amino-5-oxopentanoate = 5-aminolevulinate. It participates in porphyrin-containing compound metabolism; protoporphyrin-IX biosynthesis; 5-aminolevulinate from L-glutamyl-tRNA(Glu): step 2/2. The polypeptide is Glutamate-1-semialdehyde 2,1-aminomutase (Methanopyrus kandleri (strain AV19 / DSM 6324 / JCM 9639 / NBRC 100938)).